We begin with the raw amino-acid sequence, 361 residues long: Peptide chain release factor 1 (361 aa).

N5-methylglutamine is present on Gln-235.

It belongs to the prokaryotic/mitochondrial release factor family. Methylated by PrmC. Methylation increases the termination efficiency of RF1.

Its subcellular location is the cytoplasm. Peptide chain release factor 1 directs the termination of translation in response to the peptide chain termination codons UAG and UAA. The polypeptide is Peptide chain release factor 1 (Azoarcus sp. (strain BH72)).